The sequence spans 189 residues: Large ribosomal subunit protein uL5 (189 aa).

Belongs to the universal ribosomal protein uL5 family. As to quaternary structure, part of the 50S ribosomal subunit; part of the 5S rRNA/L5/L18/L25 subcomplex. Contacts the 5S rRNA and the P site tRNA. Forms a bridge to the 30S subunit in the 70S ribosome.

Functionally, this is one of the proteins that bind and probably mediate the attachment of the 5S RNA into the large ribosomal subunit, where it forms part of the central protuberance. In the 70S ribosome it contacts protein S13 of the 30S subunit (bridge B1b), connecting the 2 subunits; this bridge is implicated in subunit movement. Contacts the P site tRNA; the 5S rRNA and some of its associated proteins might help stabilize positioning of ribosome-bound tRNAs. In Corynebacterium jeikeium (strain K411), this protein is Large ribosomal subunit protein uL5.